The chain runs to 332 residues: Polygalacturonase inhibitor 1 (332 aa).

The first 24 residues, M1 to A24, serve as a signal peptide directing secretion. Disulfide bonds link C27–C58 and C59–C66. LRR repeat units follow at residues V72–A96, L97–A118, L119–R142, I143–D166, L167–Q192, F193–E215, I216–A236, G237–F259, P260–A283, and L284–H310. N-linked (GlcNAc...) asparagine glycosylation is present at N131. Disulfide bonds link C298–C312, C298–C320, and C320–C329.

The protein belongs to the polygalacturonase-inhibiting protein family. As to expression, highly expressed in calli, immature and mature panicles, and in three inner floral organs: lodicules, stamens and carpels. Expressed at low level in seedling roots and mature stems.

Its subcellular location is the secreted. The protein localises to the cell wall. Functionally, inhibitor of fungal polygalacturonase. Regulates floral organ number. This chain is Polygalacturonase inhibitor 1, found in Oryza sativa subsp. japonica (Rice).